A 244-amino-acid chain; its full sequence is NAD(P)H-quinone oxidoreductase subunit K (244 aa).

[4Fe-4S] cluster contacts are provided by Cys-60, Cys-61, Cys-125, and Cys-156. The segment at 213 to 244 (KSEKSIESSKLNPVEESSENIYETNSIDEVIK) is disordered. Polar residues predominate over residues 231–244 (ENIYETNSIDEVIK).

It belongs to the complex I 20 kDa subunit family. As to quaternary structure, NDH-1 can be composed of about 15 different subunits; different subcomplexes with different compositions have been identified which probably have different functions. It depends on [4Fe-4S] cluster as a cofactor.

It is found in the cellular thylakoid membrane. It catalyses the reaction a plastoquinone + NADH + (n+1) H(+)(in) = a plastoquinol + NAD(+) + n H(+)(out). It carries out the reaction a plastoquinone + NADPH + (n+1) H(+)(in) = a plastoquinol + NADP(+) + n H(+)(out). Functionally, NDH-1 shuttles electrons from an unknown electron donor, via FMN and iron-sulfur (Fe-S) centers, to quinones in the respiratory and/or the photosynthetic chain. The immediate electron acceptor for the enzyme in this species is believed to be plastoquinone. Couples the redox reaction to proton translocation, and thus conserves the redox energy in a proton gradient. Cyanobacterial NDH-1 also plays a role in inorganic carbon-concentration. In Prochlorococcus marinus subsp. pastoris (strain CCMP1986 / NIES-2087 / MED4), this protein is NAD(P)H-quinone oxidoreductase subunit K.